A 166-amino-acid chain; its full sequence is Deglycase PfpI (166 aa).

The region spanning 1-166 (MKILFLSANE…WMREFVKLLK (166 aa)) is the PfpI endopeptidase domain. C100 (nucleophile) is an active-site residue. The active site involves H101.

The protein belongs to the peptidase C56 family. Homooligomer. Exists in two functional species: the predominant form is a homohexamer that comprises about 90% of the total activity, and the minor form is trimeric.

It is found in the cytoplasm. The catalysed reaction is N(omega)-(1-hydroxy-2-oxopropyl)-L-arginyl-[protein] + H2O = lactate + L-arginyl-[protein] + H(+). It carries out the reaction N(6)-(1-hydroxy-2-oxopropyl)-L-lysyl-[protein] + H2O = lactate + L-lysyl-[protein] + H(+). The enzyme catalyses S-(1-hydroxy-2-oxopropyl)-L-cysteinyl-[protein] + H2O = lactate + L-cysteinyl-[protein] + H(+). It catalyses the reaction N(omega)-(1-hydroxy-2-oxoethyl)-L-arginyl-[protein] + H2O = L-arginyl-[protein] + glycolate + H(+). The catalysed reaction is N(6)-(1-hydroxy-2-oxoethyl)-L-lysyl-[protein] + H2O = glycolate + L-lysyl-[protein] + H(+). It carries out the reaction S-(1-hydroxy-2-oxoethyl)-L-cysteinyl-[protein] + H2O = glycolate + L-cysteinyl-[protein] + H(+). Its function is as follows. Deglycase that catalyzes the deglycation of the Maillard adducts formed between amino groups of proteins and reactive carbonyl groups of glyoxals. Thus, functions as a protein deglycase that repairs methylglyoxal- and glyoxal-glycated proteins, and releases repaired proteins and lactate or glycolate, respectively. Deglycates cysteine, arginine and lysine residues in proteins, and thus reactivates these proteins by reversing glycation by glyoxals. Thus, was shown to afford full protection against glycation of thioredoxin by glyoxal. Acts on early glycation intermediates (hemithioacetals and aminocarbinols), preventing the formation of advanced glycation endproducts (AGE) that cause irreversible damage. Prevents acrylamide formation in asparagine/glyoxal and asparagine/sugar mixtures, likely by degrading asparagine/glyoxal Maillard adducts formed at high temperatures. Also displays proteolytic activity. Cleaves at the carboxyl side of both basic and hydrophobic residues in the P1 position, indicating trypsin- and chymotrypsin-like specificities. This is Deglycase PfpI from Pyrococcus furiosus (strain ATCC 43587 / DSM 3638 / JCM 8422 / Vc1).